A 73-amino-acid polypeptide reads, in one-letter code: Gene 30 protein (73 aa).

The region spanning 12 to 66 is the HTH cro/C1-type domain; it reads LEKAINAVGGSQKVLAEKVGVTPQAINMLKKRGGSLPVTKMRKYEEVTGLPREVL. A DNA-binding region (H-T-H motif) is located at residues 23–42; the sequence is QKVLAEKVGVTPQAINMLKK.

The chain is Gene 30 protein (30) from Escherichia coli (Bacteriophage phi-80).